The chain runs to 1128 residues: Mastermind-like protein 2 (1128 aa).

2 disordered regions span residues 1–22 (MGDT…GAGL) and 81–167 (QHGQ…GDQR). A compositionally biased stretch (gly residues) spans 12 to 22 (GGLGGAPGAGL). Residues 113 to 122 (PTASQTAAPA) show a composition bias toward low complexity. Residue serine 177 is modified to Phosphoserine. Disordered stretches follow at residues 343-509 (FNID…GSNQ), 521-649 (SPSA…SNQP), 677-714 (QVSQ…GYMN), 758-794 (QDQI…GSST), and 1039-1073 (GTGL…QGTD). Polar residues-rich tracts occupy residues 347–357 (LGQQSQRSTPR) and 374–387 (GLTQ…QLRP). A compositionally biased stretch (low complexity) spans 395–426 (SMASSGLSASSPIPSVPQSQAQPPPATGAARA). Residues 431–446 (QEVSHAQQLKQIAANR) are compositionally biased toward polar residues. Composition is skewed to low complexity over residues 453–473 (HQQQ…SAGP) and 484–497 (PSPS…SPQS). The span at 566–584 (NSDQANQQMPSVLPSQSKP) shows a compositional bias: polar residues. A compositionally biased stretch (low complexity) spans 590 to 649 (TQQQPQQSSITVQPQQQQQQPQQQQQPQQQQQPQPQQQQQQQPQAQQPAAQPTQPLSNQP). 3 stretches are compositionally biased toward polar residues: residues 677 to 695 (QVSQ…QNAG), 778 to 794 (NVGN…GSST), and 1039 to 1052 (GTGL…SQPP).

Belongs to the mastermind family. As to quaternary structure, interacts through its N-terminal region with the ankyrin repeat region of the Notch proteins NOTCH1, NOTCH2, NOTCH3 and NOTCH4. Forms a DNA-binding complex with Notch proteins and RBPSUH/RBP-J kappa.

It localises to the nucleus speckle. Functionally, acts as a transcriptional coactivator for NOTCH proteins. Has been shown to amplify NOTCH-induced transcription of HES1. Potentiates activation by NOTCH3 and NOTCH4 more efficiently than MAML1 or MAML3. The polypeptide is Mastermind-like protein 2 (MAML2) (Bos taurus (Bovine)).